We begin with the raw amino-acid sequence, 273 residues long: 2-dehydro-3-deoxyphosphooctonate aldolase (273 aa).

Belongs to the KdsA family.

It localises to the cytoplasm. It carries out the reaction D-arabinose 5-phosphate + phosphoenolpyruvate + H2O = 3-deoxy-alpha-D-manno-2-octulosonate-8-phosphate + phosphate. It participates in carbohydrate biosynthesis; 3-deoxy-D-manno-octulosonate biosynthesis; 3-deoxy-D-manno-octulosonate from D-ribulose 5-phosphate: step 2/3. Its pathway is bacterial outer membrane biogenesis; lipopolysaccharide biosynthesis. The chain is 2-dehydro-3-deoxyphosphooctonate aldolase from Citrifermentans bemidjiense (strain ATCC BAA-1014 / DSM 16622 / JCM 12645 / Bem) (Geobacter bemidjiensis).